The chain runs to 424 residues: Mitogen-activated protein kinase 9 (424 aa).

The Protein kinase domain maps to 26-321 (YQQLKPIGSG…VDEALRHPYI (296 aa)). Residues 32 to 40 (IGSGAQGIV) and Lys-55 contribute to the ATP site. Asp-151 acts as the Proton acceptor in catalysis. The residue at position 183 (Thr-183) is a Phosphothreonine; by MAP2K7. The TXY motif lies at 183-185 (TPY). Residue Tyr-185 is modified to Phosphotyrosine; by MAP2K4. Positions 368-424 (KNGVVKDQPSDAAVSSNATPSQSSSINDISSMSTEQTLASDTDSSLDASTGPLEGCR) are disordered. Residues 388–417 (SQSSSINDISSMSTEQTLASDTDSSLDAST) are compositionally biased toward low complexity.

Belongs to the protein kinase superfamily. CMGC Ser/Thr protein kinase family. MAP kinase subfamily. Interacts with MECOM. Interacts with DCLK2. Binds to at least four scaffolding proteins, MAPK8IP1/JIP-1, MAPK8IP2/JIP-2, MAPK8IP3/JIP-3/JSAP1 and SPAG9/MAPK8IP4/JIP-4. These proteins also bind other components of the JNK signaling pathway. Interacts with NFATC4. Interacts with ATF7; the interaction does not phosphorylate ATF7 but acts as a docking site for ATF7-associated partners such as JUN. Interacts with BCL10. Interacts with CTNNB1 and GSK3B. Interacts with MAPKBP1. Interacts with POU5F1; phosphorylates POU5F1 at 'Ser-355'. Found in a complex with SH3RF1, RAC2, MAP3K7/TAK1, MAP2K7/MKK7, MAPK8IP1/JIP1 and MAPK8/JNK1. Mg(2+) serves as cofactor. Post-translationally, dually phosphorylated on Thr-183 and Tyr-185 by MAP2K7 and MAP2K4, which activates the enzyme. Autophosphorylated in vitro.

Its subcellular location is the cytoplasm. It is found in the nucleus. It catalyses the reaction L-seryl-[protein] + ATP = O-phospho-L-seryl-[protein] + ADP + H(+). The catalysed reaction is L-threonyl-[protein] + ATP = O-phospho-L-threonyl-[protein] + ADP + H(+). Its activity is regulated as follows. Activated by threonine and tyrosine phosphorylation by either of two dual specificity kinases, MAP2K4 and MAP2K7. MAP2K4 shows a strong preference for Tyr-185 while MAP2K7 phosphorylates Tyr-183 preferentially. Inhibited by dual specificity phosphatases, such as DUSP1. Serine/threonine-protein kinase involved in various processes such as cell proliferation, differentiation, migration, transformation and programmed cell death. Extracellular stimuli such as pro-inflammatory cytokines or physical stress stimulate the stress-activated protein kinase/c-Jun N-terminal kinase (SAP/JNK) signaling pathway. In this cascade, two dual specificity kinases MAP2K4/MKK4 and MAP2K7/MKK7 phosphorylate and activate MAPK9/JNK2. In turn, MAPK9/JNK2 phosphorylates a number of transcription factors, primarily components of AP-1 such as JUN and ATF2 and thus regulates AP-1 transcriptional activity. In response to oxidative or ribotoxic stresses, inhibits rRNA synthesis by phosphorylating and inactivating the RNA polymerase 1-specific transcription initiation factor RRN3. Promotes stressed cell apoptosis by phosphorylating key regulatory factors including TP53 and YAP1. In T-cells, MAPK8 and MAPK9 are required for polarized differentiation of T-helper cells into Th1 cells. Upon T-cell receptor (TCR) stimulation, is activated by CARMA1, BCL10, MAP2K7 and MAP3K7/TAK1 to regulate JUN protein levels. Plays an important role in the osmotic stress-induced epithelial tight-junctions disruption. When activated, promotes beta-catenin/CTNNB1 degradation and inhibits the canonical Wnt signaling pathway. Also participates in neurite growth in spiral ganglion neurons. Phosphorylates the CLOCK-BMAL1 heterodimer and plays a role in the regulation of the circadian clock. Phosphorylates POU5F1, which results in the inhibition of POU5F1's transcriptional activity and enhances its proteasomal degradation. Phosphorylates ALKBH5 in response to reactive oxygen species (ROS), promoting ALKBH5 sumoylation and inactivation. In terms of biological role, MAPK9 isoforms display different binding patterns: alpha-1 and alpha-2 preferentially bind to JUN, whereas beta-1 and beta-2 bind to ATF2. However, there is no correlation between binding and phosphorylation, which is achieved at about the same efficiency by all isoforms. JUNB is not a substrate for JNK2 alpha-2, and JUND binds only weakly to it. This chain is Mitogen-activated protein kinase 9 (MAPK9), found in Homo sapiens (Human).